Here is a 187-residue protein sequence, read N- to C-terminus: UPF0301 protein Cpar_0662 (187 aa).

Belongs to the UPF0301 (AlgH) family.

The chain is UPF0301 protein Cpar_0662 from Chlorobaculum parvum (strain DSM 263 / NCIMB 8327) (Chlorobium vibrioforme subsp. thiosulfatophilum).